We begin with the raw amino-acid sequence, 660 residues long: DNA mismatch repair protein MutL (660 aa).

Disordered regions lie at residues 368 to 426 (PQQT…PTKK) and 439 to 461 (NREQ…STQQ). Low complexity predominate over residues 406-417 (SSSSNSTAPSRS).

Belongs to the DNA mismatch repair MutL/HexB family.

Functionally, this protein is involved in the repair of mismatches in DNA. It is required for dam-dependent methyl-directed DNA mismatch repair. May act as a 'molecular matchmaker', a protein that promotes the formation of a stable complex between two or more DNA-binding proteins in an ATP-dependent manner without itself being part of a final effector complex. This chain is DNA mismatch repair protein MutL, found in Aliivibrio fischeri (strain ATCC 700601 / ES114) (Vibrio fischeri).